A 127-amino-acid polypeptide reads, in one-letter code: C-C motif chemokine 28 (127 aa).

Positions 1 to 19 are cleaved as a signal peptide; it reads MQQRGLAIVALAVCAALHA. Intrachain disulfides connect Cys-30–Cys-58 and Cys-31–Cys-73. A glycan (N-linked (GlcNAc...) asparagine) is linked at Asn-78. Positions 92–115 are enriched in basic residues; sequence KNGKGNVCHRKKHHGKRNSNRAHQ. The segment at 92–127 is disordered; sequence KNGKGNVCHRKKHHGKRNSNRAHQGKHETYGHKTPY. Positions 116–127 are enriched in basic and acidic residues; the sequence is GKHETYGHKTPY.

This sequence belongs to the intercrine beta (chemokine CC) family. As to expression, preferentially expressed by epithelial cells of diverse tissues including normal and pathological colon, salivary gland, mammary gland, trachea and rectum. Also found in prostate, spleen, thyroid, psoriasis skin and in lower levels in peripheral blood leukocytes, small intestine, Peyer patches, stomach and normal skin.

It is found in the secreted. In terms of biological role, chemotactic activity for resting CD4, CD8 T-cells and eosinophils. Binds to CCR3 and CCR10 and induces calcium mobilization in a dose-dependent manner. The protein is C-C motif chemokine 28 (CCL28) of Homo sapiens (Human).